A 461-amino-acid polypeptide reads, in one-letter code: Asparagine--tRNA ligase (461 aa).

It belongs to the class-II aminoacyl-tRNA synthetase family. Homodimer.

The protein localises to the cytoplasm. It carries out the reaction tRNA(Asn) + L-asparagine + ATP = L-asparaginyl-tRNA(Asn) + AMP + diphosphate + H(+). The chain is Asparagine--tRNA ligase from Oleidesulfovibrio alaskensis (strain ATCC BAA-1058 / DSM 17464 / G20) (Desulfovibrio alaskensis).